Reading from the N-terminus, the 786-residue chain is LPS-assembly protein LptD (786 aa).

Positions 1-39 (MPPKPLFPNVFPGDGAPRKRRLALALLAVPGLVPAVSYA) are cleaved as a signal peptide.

Belongs to the LptD family. In terms of assembly, component of the lipopolysaccharide transport and assembly complex. Interacts with LptE and LptA.

It localises to the cell outer membrane. Together with LptE, is involved in the assembly of lipopolysaccharide (LPS) at the surface of the outer membrane. The polypeptide is LPS-assembly protein LptD (Burkholderia ambifaria (strain ATCC BAA-244 / DSM 16087 / CCUG 44356 / LMG 19182 / AMMD) (Burkholderia cepacia (strain AMMD))).